A 457-amino-acid polypeptide reads, in one-letter code: Mannose-6-phosphate isomerase (457 aa).

Zn(2+) contacts are provided by Q108, H110, E135, and H292. The active site involves R311.

It belongs to the mannose-6-phosphate isomerase type 1 family. Zn(2+) is required as a cofactor.

The protein localises to the cytoplasm. The enzyme catalyses D-mannose 6-phosphate = D-fructose 6-phosphate. Its pathway is nucleotide-sugar biosynthesis; GDP-alpha-D-mannose biosynthesis; alpha-D-mannose 1-phosphate from D-fructose 6-phosphate: step 1/2. In terms of biological role, involved in the synthesis of the GDP-mannose and dolichol-phosphate-mannose required for a number of critical mannosyl transfer reactions. The polypeptide is Mannose-6-phosphate isomerase (pmi1) (Aspergillus fumigatus (strain ATCC MYA-4609 / CBS 101355 / FGSC A1100 / Af293) (Neosartorya fumigata)).